A 161-amino-acid polypeptide reads, in one-letter code: Nucleotide-binding protein Swoo_3646 (161 aa).

This sequence belongs to the YajQ family.

In terms of biological role, nucleotide-binding protein. This Shewanella woodyi (strain ATCC 51908 / MS32) protein is Nucleotide-binding protein Swoo_3646.